Reading from the N-terminus, the 279-residue chain is Ribosomal RNA small subunit methyltransferase J (279 aa).

Residues E138–R139 and D194 contribute to the S-adenosyl-L-methionine site.

Belongs to the methyltransferase superfamily. RsmJ family.

The protein localises to the cytoplasm. It catalyses the reaction guanosine(1516) in 16S rRNA + S-adenosyl-L-methionine = N(2)-methylguanosine(1516) in 16S rRNA + S-adenosyl-L-homocysteine + H(+). Specifically methylates the guanosine in position 1516 of 16S rRNA. In Acinetobacter baumannii (strain ATCC 17978 / DSM 105126 / CIP 53.77 / LMG 1025 / NCDC KC755 / 5377), this protein is Ribosomal RNA small subunit methyltransferase J.